Reading from the N-terminus, the 680-residue chain is DNA ligase (680 aa).

32–36 (DTVYD) contributes to the NAD(+) binding site. Residues 47-66 (QNDPGLQRPDSPTQRVGGAP) form a disordered region. Residues 81-82 (SL) and Glu-115 contribute to the NAD(+) site. Catalysis depends on Lys-117, which acts as the N6-AMP-lysine intermediate. Arg-138, Glu-175, Lys-291, and Lys-315 together coordinate NAD(+). Residues Cys-409, Cys-412, Cys-427, and Cys-432 each contribute to the Zn(2+) site. A BRCT domain is found at 602–680 (DADGVLQGKT…EADLTALLQP (79 aa)).

Belongs to the NAD-dependent DNA ligase family. LigA subfamily. Mg(2+) is required as a cofactor. It depends on Mn(2+) as a cofactor.

The catalysed reaction is NAD(+) + (deoxyribonucleotide)n-3'-hydroxyl + 5'-phospho-(deoxyribonucleotide)m = (deoxyribonucleotide)n+m + AMP + beta-nicotinamide D-nucleotide.. In terms of biological role, DNA ligase that catalyzes the formation of phosphodiester linkages between 5'-phosphoryl and 3'-hydroxyl groups in double-stranded DNA using NAD as a coenzyme and as the energy source for the reaction. It is essential for DNA replication and repair of damaged DNA. This chain is DNA ligase, found in Synechococcus sp. (strain CC9605).